We begin with the raw amino-acid sequence, 471 residues long: Tyrosine--tRNA ligase (471 aa).

Position 41 (Y41) interacts with L-tyrosine. A 'HIGH' region motif is present at residues 46–55 (PTAPSLHVGN). Positions 176 and 180 each coordinate L-tyrosine. Positions 236-240 (KFGKT) match the 'KMSKS' region motif. ATP is bound at residue K239. Residues 403-471 (DLITHILQKV…GKKHLAAVFY (69 aa)) enclose the S4 RNA-binding domain.

The protein belongs to the class-I aminoacyl-tRNA synthetase family. TyrS type 1 subfamily. In terms of assembly, homodimer.

It localises to the cytoplasm. It carries out the reaction tRNA(Tyr) + L-tyrosine + ATP = L-tyrosyl-tRNA(Tyr) + AMP + diphosphate + H(+). Functionally, catalyzes the attachment of tyrosine to tRNA(Tyr) in a two-step reaction: tyrosine is first activated by ATP to form Tyr-AMP and then transferred to the acceptor end of tRNA(Tyr). The polypeptide is Tyrosine--tRNA ligase (Tropheryma whipplei (strain Twist) (Whipple's bacillus)).